Here is a 74-residue protein sequence, read N- to C-terminus: Putative defensin-like protein 128 (74 aa).

The N-terminal stretch at 1 to 24 is a signal peptide; sequence MSKLTNVVIFIVFFLGMMAKETQG. 4 disulfides stabilise this stretch: Cys28/Cys72, Cys37/Cys56, Cys42/Cys66, and Cys46/Cys68.

Belongs to the DEFL family.

The protein localises to the secreted. This Arabidopsis thaliana (Mouse-ear cress) protein is Putative defensin-like protein 128 (LCR8).